Consider the following 516-residue polypeptide: MAFTNVCLWTLLAFMLTWTVFYVTNRGKKATQLADAVVEEREDGATDVIIVGAGVGGSALAYALAKDGRRVHVIERDLREPERIMGEFMQPGGRLMLSKLGLEDCLEGIDAQKATGMTVYKDGKEAVASFPVDNNNFPFDPSARSFHNGRFVQRLRQKASSLPNVRLEEGTVKSLIEEKGVIKGVTYKNSAGEETTALAPLTVVCDGCYSNLRRSLNDNNAEVLSYQVGFISKNCQLEEPEKLKLIMSKPSFTMLYQISSTDVRCVFEVLPNNIPSISNGEMATFVKNTIAPQVPLKLRKIFLKGIDEGEHIKAMPTKKMTATLSEKKGVILLGDAFNMRHPAIASGMMVLLSDILILRRLLQPLSNLGNAQKISQVIKSFYDIRKPMSATVNTLGNAFSQVLVASTDEAKEAMRQGCYDYLSSGGFRTSGMMALLGGMNPRPISLIYHLCAITLSSIGHLLSPFPSPLRIWHSLRLFGLAMKMLVPHLKAEGVSQMLFPVNAAAYSKSYMAATAL.

2 helical membrane passes run 3 to 23 (FTNV…VFYV) and 45 to 65 (ATDV…YALA). Residues 55–56 (VG), 75–76 (ER), Arg83, Phe88, Arg156, Val172, Asp335, and Met348 contribute to the FAD site. A helical transmembrane segment spans residues 446–466 (LIYHLCAITLSSIGHLLSPFP).

It belongs to the squalene monooxygenase family. FAD serves as cofactor. As to expression, expressed in seedlings, leaves, stems and inflorescences. Detected in siliques.

It is found in the membrane. The enzyme catalyses squalene + reduced [NADPH--hemoprotein reductase] + O2 = (S)-2,3-epoxysqualene + oxidized [NADPH--hemoprotein reductase] + H2O + H(+). The protein operates within terpene metabolism; lanosterol biosynthesis; lanosterol from farnesyl diphosphate: step 2/3. In terms of biological role, catalyzes the stereospecific oxidation of squalene to (S)-2,3-epoxysqualene, and is considered to be a rate-limiting enzyme in steroid biosynthesis. This is Squalene epoxidase 5 (SQE5) from Arabidopsis thaliana (Mouse-ear cress).